Reading from the N-terminus, the 748-residue chain is Serine/threonine-protein kinase CG17528 (748 aa).

Composition is skewed to polar residues over residues 22–35 and 47–59; these read QASPSATSPQSVPS and EKTNQPHNVQEDN. 2 disordered regions span residues 22–41 and 47–81; these read QASPSATSPQSVPSKANVVT and EKTNQPHNVQEDNNYNRDCDSPESSSSEQDKELDD. A phosphoserine mark is found at serine 67, serine 70, serine 73, serine 87, serine 88, and serine 89. Threonine 91 carries the post-translational modification Phosphothreonine. Serine 93 is subject to Phosphoserine. Phosphothreonine is present on threonine 100. 2 consecutive Doublecortin domains span residues 158–244 and 313–396; these read LRIK…VEYN and RIVT…AEDF. One can recognise a Protein kinase domain in the interval 477–735; it reads YSLGRIIGDG…SEDILDHSWT (259 aa). Residues 483-491 and lysine 506 contribute to the ATP site; that span reads IGDGNFAIV. Aspartate 598 acts as the Proton acceptor in catalysis.

It belongs to the protein kinase superfamily. CAMK Ser/Thr protein kinase family. CaMK subfamily.

It carries out the reaction L-seryl-[protein] + ATP = O-phospho-L-seryl-[protein] + ADP + H(+). It catalyses the reaction L-threonyl-[protein] + ATP = O-phospho-L-threonyl-[protein] + ADP + H(+). This chain is Serine/threonine-protein kinase CG17528, found in Drosophila melanogaster (Fruit fly).